Reading from the N-terminus, the 384-residue chain is Heparin lyase I (384 aa).

Positions 1 to 21 are cleaved as a signal peptide; the sequence is MKKQILYLIVLQQLFLCSAYA. The residue at position 22 (Gln22) is a Blocked amino end (Gln). Ser39 carries an O-linked (Man...) serine glycan.

Monomer. The N-terminus is blocked.

It localises to the periplasm. The catalysed reaction is Eliminative cleavage of polysaccharides containing (1-&gt;4)-linked D-glucuronate or L-iduronate residues and (1-&gt;4)-alpha-linked 2-sulfoamino-2-deoxy-6-sulfo-D-glucose residues to give oligosaccharides with terminal 4-deoxy-alpha-D-gluc-4-enuronosyl groups at their non-reducing ends.. Functionally, degrades heparin and heparan sulfate. Also implicated in the release of heparin-bound growth factors from the extracellular matrix. This Pedobacter heparinus (Flavobacterium heparinum) protein is Heparin lyase I.